We begin with the raw amino-acid sequence, 156 residues long: ATP synthase subunit b (156 aa).

Residues 7–27 (LVAQMVVFFILWWVVAKFIWP) traverse the membrane as a helical segment.

This sequence belongs to the ATPase B chain family. As to quaternary structure, F-type ATPases have 2 components, F(1) - the catalytic core - and F(0) - the membrane proton channel. F(1) has five subunits: alpha(3), beta(3), gamma(1), delta(1), epsilon(1). F(0) has three main subunits: a(1), b(2) and c(10-14). The alpha and beta chains form an alternating ring which encloses part of the gamma chain. F(1) is attached to F(0) by a central stalk formed by the gamma and epsilon chains, while a peripheral stalk is formed by the delta and b chains.

Its subcellular location is the cell inner membrane. Its function is as follows. F(1)F(0) ATP synthase produces ATP from ADP in the presence of a proton or sodium gradient. F-type ATPases consist of two structural domains, F(1) containing the extramembraneous catalytic core and F(0) containing the membrane proton channel, linked together by a central stalk and a peripheral stalk. During catalysis, ATP synthesis in the catalytic domain of F(1) is coupled via a rotary mechanism of the central stalk subunits to proton translocation. In terms of biological role, component of the F(0) channel, it forms part of the peripheral stalk, linking F(1) to F(0). In Ralstonia pickettii (strain 12J), this protein is ATP synthase subunit b.